The following is a 173-amino-acid chain: Thiol-disulfide oxidoreductase ResA (173 aa).

A helical; Signal-anchor for type II membrane protein transmembrane segment spans residues 10 to 29 (VIILLILCGAVGFTLYQGFF). One can recognise a Thioredoxin domain in the interval 35–173 (MQIGKEAPNF…LEGYLQKITP (139 aa)). The cysteines at positions 73 and 76 are disulfide-linked.

Belongs to the thioredoxin family. ResA subfamily.

It is found in the cell membrane. Its pathway is protein modification; cytochrome c assembly. Its function is as follows. Thiol-disulfide oxidoreductase which is required in disulfide reduction during c-type cytochrome synthesis. May accept reducing equivalents from CcdA, leading to breakage of disulfide bonds in apocytochrome c; following this reduction heme can be covalently attached. This is Thiol-disulfide oxidoreductase ResA from Bacillus cereus (strain ZK / E33L).